The sequence spans 454 residues: Bifunctional protein GlmU (454 aa).

A pyrophosphorylase region spans residues 1-226; that stretch reads MALNVVILAA…AIEVEGANNR (226 aa). Residues 8 to 11, Lys22, Gln73, 78 to 79, 100 to 102, Gly137, Glu151, Asn166, and Asn224 each bind UDP-N-acetyl-alpha-D-glucosamine; these read LAAG, GT, and YGD. Asp102 serves as a coordination point for Mg(2+). Mg(2+) is bound at residue Asn224. Residues 227–247 form a linker region; it reads VQLAQLERAYQARAAEKLMLE. Positions 248–454 are N-acetyltransferase; that stretch reads GANLRDPARI…GWPRPVKLKK (207 aa). Positions 330 and 348 each coordinate UDP-N-acetyl-alpha-D-glucosamine. Residue His360 is the Proton acceptor of the active site. Residues Tyr363 and Asn374 each coordinate UDP-N-acetyl-alpha-D-glucosamine. Residues Ala377, 383–384, Ser402, Ala420, and Arg437 contribute to the acetyl-CoA site; that span reads NY.

This sequence in the N-terminal section; belongs to the N-acetylglucosamine-1-phosphate uridyltransferase family. The protein in the C-terminal section; belongs to the transferase hexapeptide repeat family. As to quaternary structure, homotrimer. Mg(2+) serves as cofactor.

Its subcellular location is the cytoplasm. It carries out the reaction alpha-D-glucosamine 1-phosphate + acetyl-CoA = N-acetyl-alpha-D-glucosamine 1-phosphate + CoA + H(+). The catalysed reaction is N-acetyl-alpha-D-glucosamine 1-phosphate + UTP + H(+) = UDP-N-acetyl-alpha-D-glucosamine + diphosphate. The protein operates within nucleotide-sugar biosynthesis; UDP-N-acetyl-alpha-D-glucosamine biosynthesis; N-acetyl-alpha-D-glucosamine 1-phosphate from alpha-D-glucosamine 6-phosphate (route II): step 2/2. It functions in the pathway nucleotide-sugar biosynthesis; UDP-N-acetyl-alpha-D-glucosamine biosynthesis; UDP-N-acetyl-alpha-D-glucosamine from N-acetyl-alpha-D-glucosamine 1-phosphate: step 1/1. It participates in bacterial outer membrane biogenesis; LPS lipid A biosynthesis. Its function is as follows. Catalyzes the last two sequential reactions in the de novo biosynthetic pathway for UDP-N-acetylglucosamine (UDP-GlcNAc). The C-terminal domain catalyzes the transfer of acetyl group from acetyl coenzyme A to glucosamine-1-phosphate (GlcN-1-P) to produce N-acetylglucosamine-1-phosphate (GlcNAc-1-P), which is converted into UDP-GlcNAc by the transfer of uridine 5-monophosphate (from uridine 5-triphosphate), a reaction catalyzed by the N-terminal domain. The sequence is that of Bifunctional protein GlmU from Shewanella woodyi (strain ATCC 51908 / MS32).